A 137-amino-acid polypeptide reads, in one-letter code: Basic phospholipase A2 homolog 2 (137 aa).

Residues 1–16 form the signal peptide; that stretch reads MRTLWIMAVLLVGVEG. 7 cysteine pairs are disulfide-bonded: cysteine 42-cysteine 131, cysteine 44-cysteine 60, cysteine 59-cysteine 111, cysteine 65-cysteine 137, cysteine 66-cysteine 104, cysteine 73-cysteine 97, and cysteine 91-cysteine 102. The interval 121–133 is important for membrane-damaging activities in eukaryotes and bacteria; heparin-binding; sequence KKYRYYLKPLCKK.

The protein belongs to the phospholipase A2 family. Group II subfamily. K49 sub-subfamily. Homodimer; non-covalently linked. Binds to heparin. It binds long-chain fatty acids covalently by a rapid, spontaneous, and autocatalytic process. When acylated, it binds to the surface of liposomes and isolated muscle membranes, with the fatty acid moiety inserted into the lipid bilayer and possibly acting as an anchor. As to expression, expressed by the venom gland.

It is found in the secreted. With respect to regulation, heparin inhibits the myotoxic activity. Suramin inhibits the myotoxic activity. High level of membrane cholesterol content reduces cytolytic activity, whereas low level of membrane cholesterol content increases cytolytic activity. Snake venom phospholipase A2 homolog that lacks enzymatic activity. Is myotoxic and induces a dose-dependent edema in the mouse foot pad. Also exhibits strong anticoagulant effects by binding to factor Xa (F10) and inhibiting the prothrombinase activity (IC(50) is 3 nM). In addition, it shows cytotoxic activity to a variety of cell types and bactericidal activity to a variety of Gram-negative and Gram-positive bacteria. Also induces a very rapid release of large amounts of potassium ions and ATP from muscle cells, which accounts for the pain reaction characteristic of viperid envenomations. The released ATP amplifies the effect of the myotoxins, acting as a 'danger signal', which spreads and causes further damage by acting on purinergic receptors. A model of myotoxic mechanism has been proposed: an apo Lys49-PLA2 is activated by the entrance of a hydrophobic molecule (e.g. fatty acid) at the hydrophobic channel of the protein leading to a reorientation of a monomer. This reorientation causes a transition between 'inactive' to 'active' states, causing alignment of C-terminal and membrane-docking sites (MDoS) side-by-side and putting the membrane-disruption sites (MDiS) in the same plane, exposed to solvent and in a symmetric position for both monomers. The MDoS region stabilizes the toxin on membrane by the interaction of charged residues with phospholipid head groups. Subsequently, the MDiS region destabilizes the membrane with penetration of hydrophobic residues. This insertion causes a disorganization of the membrane, allowing an uncontrolled influx of ions (i.e. calcium and sodium), and eventually triggering irreversible intracellular alterations and cell death. The polypeptide is Basic phospholipase A2 homolog 2 (Bothrops asper (Terciopelo)).